A 106-amino-acid polypeptide reads, in one-letter code: L-rhamnose mutarotase (106 aa).

Position 20 (Y20) interacts with substrate. H24 acts as the Proton donor in catalysis. Residues Y43 and 78-79 contribute to the substrate site; that span reads WW.

This sequence belongs to the rhamnose mutarotase family. Homodimer.

It localises to the cytoplasm. The catalysed reaction is alpha-L-rhamnose = beta-L-rhamnose. The protein operates within carbohydrate metabolism; L-rhamnose metabolism. In terms of biological role, involved in the anomeric conversion of L-rhamnose. This is L-rhamnose mutarotase from Rhizobium johnstonii (strain DSM 114642 / LMG 32736 / 3841) (Rhizobium leguminosarum bv. viciae).